Consider the following 296-residue polypeptide: Lipoyl synthase (296 aa).

C37, C42, C48, C63, C67, C70, and S276 together coordinate [4Fe-4S] cluster. Positions 49-265 (WSKKHTTVMI…ERVAKTKGFL (217 aa)) constitute a Radical SAM core domain.

Belongs to the radical SAM superfamily. Lipoyl synthase family. Requires [4Fe-4S] cluster as cofactor.

Its subcellular location is the cytoplasm. It carries out the reaction [[Fe-S] cluster scaffold protein carrying a second [4Fe-4S](2+) cluster] + N(6)-octanoyl-L-lysyl-[protein] + 2 oxidized [2Fe-2S]-[ferredoxin] + 2 S-adenosyl-L-methionine + 4 H(+) = [[Fe-S] cluster scaffold protein] + N(6)-[(R)-dihydrolipoyl]-L-lysyl-[protein] + 4 Fe(3+) + 2 hydrogen sulfide + 2 5'-deoxyadenosine + 2 L-methionine + 2 reduced [2Fe-2S]-[ferredoxin]. It functions in the pathway protein modification; protein lipoylation via endogenous pathway; protein N(6)-(lipoyl)lysine from octanoyl-[acyl-carrier-protein]: step 2/2. Functionally, catalyzes the radical-mediated insertion of two sulfur atoms into the C-6 and C-8 positions of the octanoyl moiety bound to the lipoyl domains of lipoate-dependent enzymes, thereby converting the octanoylated domains into lipoylated derivatives. The protein is Lipoyl synthase of Rickettsia massiliae (strain Mtu5).